We begin with the raw amino-acid sequence, 417 residues long: Phosphoglycerate kinase (417 aa).

Positions 23, 24, 25, 26, 38, 39, 62, 63, 65, 66, 121, 122, 169, and 170 each coordinate (2R)-3-phosphoglycerate. Position 213 (G213) interacts with ADP. Position 213 (G213) interacts with CDP. AMP-binding residues include A214 and K215. An ATP-binding site is contributed by A214. Residue A214 participates in Mg(2+) binding. D218 is a binding site for CDP. D218 lines the Mg(2+) pocket. K219 contacts AMP. K219 lines the ATP pocket. G237 is a binding site for ADP. Residue G237 coordinates CDP. 2 residues coordinate AMP: G238 and G312. Positions 238 and 312 each coordinate ATP. G337 and F342 together coordinate CDP. Residue F342 coordinates ADP. E343 is a binding site for AMP. Residues E343, D374, and T375 each coordinate ATP. Residue D374 participates in Mg(2+) binding.

Belongs to the phosphoglycerate kinase family. In terms of assembly, monomer. The cofactor is Mg(2+).

The protein localises to the cytoplasm. Its subcellular location is the mitochondrion. It carries out the reaction (2R)-3-phosphoglycerate + ATP = (2R)-3-phospho-glyceroyl phosphate + ADP. Its pathway is carbohydrate degradation; glycolysis; pyruvate from D-glyceraldehyde 3-phosphate: step 2/5. In terms of biological role, catalyzes one of the two ATP producing reactions in the glycolytic pathway via the reversible conversion of 1,3-diphosphoglycerate to 3-phosphoglycerate. Both L- and D- forms of purine and pyrimidine nucleotides can be used as substrates, but the activity is much lower on pyrimidines. Negatively regulates the biosynthesis of acetyl-CoA from pyruvate in the mitochondrion. This is Phosphoglycerate kinase (PGK1) from Candida maltosa (Yeast).